A 666-amino-acid chain; its full sequence is Collagen alpha-1(XXV) chain (666 aa).

The interval 1–24 (MLVKKLAGKGGGRESGSEDPRPLG) is disordered. The Cytoplasmic segment spans residues 1–33 (MLVKKLAGKGGGRESGSEDPRPLGQRCAGTMPS). The span at 11–21 (GGRESGSEDPR) shows a compositional bias: basic and acidic residues. A helical; Signal-anchor for type II membrane protein transmembrane segment spans residues 34–54 (CTALATLLSVVAVAFCFYLGV). The Extracellular portion of the chain corresponds to 55–666 (KTNDLQARIA…GLPMPGCWQK (612 aa)). The disordered stretch occupies residues 116–168 (LECNCPAGPPGKRGKRGRRGESGPPGQPGPQGPPGPKGDKGEQGDQGPRMVFP). Residues 121 to 164 (PAGPPGKRGKRGRRGESGPPGQPGPQGPPGPKGDKGEQGDQGPR) form the Collagen-like 1 domain. A compositionally biased stretch (pro residues) spans 140–151 (PGQPGPQGPPGP). Residues 181–188 (LIKRRLIK) are interaction with amyloid-beta peptide. Disordered regions lie at residues 189-428 (GDQG…ATEI) and 445-666 (LTVT…CWQK). Collagen-like domains lie at 192-247 (GQAG…QKGS), 249-308 (GAPG…PGSS), 311-370 (GIKG…AGPP), 373-425 (GERG…DPGA), 455-514 (GPQG…KGEK), 529-588 (GPPG…KGAM), and 589-648 (GEPG…DGLD). The segment covering 196–208 (PPGPPGPPGPRGP) has biased composition (pro residues). A compositionally biased stretch (low complexity) spans 230–245 (PGEQGLMGPLGPPGQK). Basic and acidic residues predominate over residues 280–290 (EPGKEGEKGDA). Residues 336 to 358 (LPGIKGEPGFIGPQGEPGLPGLP) show a composition bias toward low complexity. Composition is skewed to basic and acidic residues over residues 361 to 377 (KGDR…ERGD) and 398 to 407 (SKGDRGDKGD). The span at 457–466 (QGLQGPKGEQ) shows a compositional bias: low complexity. Positions 494 to 503 (GEKGGLGLPG) are enriched in gly residues. Residues 528 to 543 (IGPPGPPGPHGPPGPM) are compositionally biased toward pro residues. Residues 615-638 (RGEKGDLGEKGEKGFRGVKGEKGE) are compositionally biased toward basic and acidic residues.

In terms of assembly, forms homodimers and homotrimers. Binds to the fibrillized forms of amyloid-beta protein 40 (beta-APP40) and amyloid-betad protein 42 (beta-APP42). Found associated with beta-APP42 more frequently than with beta-APP40. In terms of processing, undergoes proteolytic cleavage by furin protease to yield the soluble collagen-like Alzheimer amyloid plaque component. Glycosylated. Post-translationally, hydroxylated on proline and lysine residues. In terms of tissue distribution, expressed predominantly in neurons with low levels also detected in heart, testis and eye.

The protein localises to the membrane. Functionally, inhibits fibrillization of amyloid-beta peptide during the elongation phase. Has also been shown to assemble amyloid fibrils into protease-resistant aggregates. Binds heparin. The protein is Collagen alpha-1(XXV) chain of Mus musculus (Mouse).